The primary structure comprises 97 residues: Venom peptide HsVx1 (97 aa).

The signal sequence occupies residues 1-20 (MSHLRIAVTFLCTLFALTAG).

This sequence belongs to the scorpion La1-like peptide family. Contains 4 disulfide bonds. In terms of tissue distribution, expressed by the venom gland.

It localises to the secreted. The sequence is that of Venom peptide HsVx1 from Heterometrus spinifer (Asia giant forest scorpion).